Reading from the N-terminus, the 64-residue chain is Protein DsrB (64 aa).

Belongs to the DsrB family.

The chain is Protein DsrB from Salmonella arizonae (strain ATCC BAA-731 / CDC346-86 / RSK2980).